Reading from the N-terminus, the 243-residue chain is 1-(5-phosphoribosyl)-5-[(5-phosphoribosylamino)methylideneamino] imidazole-4-carboxamide isomerase (243 aa).

Asp8 serves as the catalytic Proton acceptor. The Proton donor role is filled by Asp129.

It belongs to the HisA/HisF family.

Its subcellular location is the cytoplasm. The catalysed reaction is 1-(5-phospho-beta-D-ribosyl)-5-[(5-phospho-beta-D-ribosylamino)methylideneamino]imidazole-4-carboxamide = 5-[(5-phospho-1-deoxy-D-ribulos-1-ylimino)methylamino]-1-(5-phospho-beta-D-ribosyl)imidazole-4-carboxamide. It participates in amino-acid biosynthesis; L-histidine biosynthesis; L-histidine from 5-phospho-alpha-D-ribose 1-diphosphate: step 4/9. The protein is 1-(5-phosphoribosyl)-5-[(5-phosphoribosylamino)methylideneamino] imidazole-4-carboxamide isomerase of Azorhizobium caulinodans (strain ATCC 43989 / DSM 5975 / JCM 20966 / LMG 6465 / NBRC 14845 / NCIMB 13405 / ORS 571).